We begin with the raw amino-acid sequence, 400 residues long: Small ribosomal subunit protein bS1 (400 aa).

4 S1 motif domains span residues 17 to 87 (GDVV…VTYL), 107 to 173 (EEVV…LSRR), 194 to 262 (GDVV…LSLK), and 279 to 348 (GDVV…LSIK). Over residues 351-366 (EERPAQEEGQKEEKRA) the composition is skewed to basic and acidic residues. The disordered stretch occupies residues 351-400 (EERPAQEEGQKEEKRAARPRRPRRQEKRDFELPETQTGFSMADLFGDIEL).

The protein belongs to the bacterial ribosomal protein bS1 family. Post-translationally, phosphorylated.

Its function is as follows. Binds mRNA; thus facilitating recognition of the initiation point. It is needed to translate mRNA with a short Shine-Dalgarno (SD) purine-rich sequence. This is Small ribosomal subunit protein bS1 (rpsA) from Streptococcus pneumoniae (strain ATCC BAA-255 / R6).